A 264-amino-acid chain; its full sequence is Major prion protein (264 aa).

Residues 1-24 form the signal peptide; that stretch reads MVKSHIGSWILVLFVAMWSDVGLC. The interaction with GRB2, ERI3 and SYN1 stretch occupies residues 25-241; sequence KKRPKPGGGW…ESQAYYQRGA (217 aa). Residues 28–119 form a disordered region; the sequence is PKPGGGWNTG…WNKPSKPKTN (92 aa). 6 tandem repeats follow at residues 54–62, 63–70, 71–78, 79–86, 87–94, and 95–103. Positions 54–103 are 6 X 8 AA tandem repeats of P-H-G-G-G-W-G-Q; it reads PQGGGGWGQPHGGGWGQPHGGGWGQPHGGGWGQPHGGGWGQPHGGGGWGQ. Over residues 55 to 105 the composition is skewed to gly residues; it reads QGGGGWGQPHGGGWGQPHGGGWGQPHGGGWGQPHGGGWGQPHGGGGWGQGG. Histidine 72, glycine 73, glycine 74, histidine 80, glycine 81, glycine 82, histidine 88, glycine 89, glycine 90, histidine 96, glycine 98, and glycine 99 together coordinate Cu(2+). Cysteine 190 and cysteine 225 are joined by a disulfide. Residues asparagine 192 and asparagine 208 are each glycosylated (N-linked (GlcNAc...) asparagine). Alanine 241 carries GPI-anchor amidated alanine lipidation. A propeptide spans 242–264 (removed in mature form); sequence SVILFSSPPVILLISFLIFLIVG.

The protein belongs to the prion family. As to quaternary structure, monomer and homodimer. Has a tendency to aggregate into amyloid fibrils containing a cross-beta spine, formed by a steric zipper of superposed beta-strands. Soluble oligomers may represent an intermediate stage on the path to fibril formation. Copper binding may promote oligomerization. Interacts with GRB2, APP, ERI3/PRNPIP and SYN1. Mislocalized cytosolically exposed PrP interacts with MGRN1; this interaction alters MGRN1 subcellular location and causes lysosomal enlargement. Interacts with KIAA1191.

Its subcellular location is the cell membrane. The protein resides in the golgi apparatus. Its function is as follows. Its primary physiological function is unclear. Has cytoprotective activity against internal or environmental stresses. May play a role in neuronal development and synaptic plasticity. May be required for neuronal myelin sheath maintenance. May play a role in iron uptake and iron homeostasis. Soluble oligomers are toxic to cultured neuroblastoma cells and induce apoptosis (in vitro). Association with GPC1 (via its heparan sulfate chains) targets PRNP to lipid rafts. Also provides Cu(2+) or Zn(2+) for the ascorbate-mediated GPC1 deaminase degradation of its heparan sulfate side chains. The protein is Major prion protein (PRNP) of Antilope cervicapra (Blackbuck).